We begin with the raw amino-acid sequence, 317 residues long: tRNA(Ile)-lysidine synthase (317 aa).

30-35 serves as a coordination point for ATP; the sequence is SGGSDS.

The protein belongs to the tRNA(Ile)-lysidine synthase family.

Its subcellular location is the cytoplasm. The catalysed reaction is cytidine(34) in tRNA(Ile2) + L-lysine + ATP = lysidine(34) in tRNA(Ile2) + AMP + diphosphate + H(+). In terms of biological role, ligates lysine onto the cytidine present at position 34 of the AUA codon-specific tRNA(Ile) that contains the anticodon CAU, in an ATP-dependent manner. Cytidine is converted to lysidine, thus changing the amino acid specificity of the tRNA from methionine to isoleucine. This is tRNA(Ile)-lysidine synthase from Chlamydia abortus (strain DSM 27085 / S26/3) (Chlamydophila abortus).